A 401-amino-acid polypeptide reads, in one-letter code: L-rhamnonate dehydratase (401 aa).

Substrate is bound by residues histidine 29 and arginine 55. Mg(2+) contacts are provided by aspartate 222, glutamate 248, and glutamate 276. Histidine 325 serves as the catalytic Proton acceptor. Glutamate 345 contacts substrate.

This sequence belongs to the mandelate racemase/muconate lactonizing enzyme family. RhamD subfamily. As to quaternary structure, homooctamer; tetramer of dimers. It depends on Mg(2+) as a cofactor.

It carries out the reaction L-rhamnonate = 2-dehydro-3-deoxy-L-rhamnonate + H2O. Catalyzes the dehydration of L-rhamnonate to 2-keto-3-deoxy-L-rhamnonate (KDR). Can also dehydrate L-lyxonate, L-mannonate and D-gulonate, although less efficiently, but not 2-keto-4-hydroxyheptane-1,7-dioate. The chain is L-rhamnonate dehydratase (rhmD) from Escherichia coli (strain K12).